The primary structure comprises 444 residues: Trigger factor (444 aa).

Residues 166 to 251 (GDQIVIDFKG…VKAVKAPKPA (86 aa)) enclose the PPIase FKBP-type domain.

This sequence belongs to the FKBP-type PPIase family. Tig subfamily.

The protein localises to the cytoplasm. The enzyme catalyses [protein]-peptidylproline (omega=180) = [protein]-peptidylproline (omega=0). Functionally, involved in protein export. Acts as a chaperone by maintaining the newly synthesized protein in an open conformation. Functions as a peptidyl-prolyl cis-trans isomerase. In Cereibacter sphaeroides (strain ATCC 17025 / ATH 2.4.3) (Rhodobacter sphaeroides), this protein is Trigger factor.